The primary structure comprises 412 residues: FAD-dependent monooxygenase nscC (412 aa).

Residues 1–21 form the signal peptide; it reads MGKPQETILIIGAGIAGLTAS. Residues glutamate 35 and alanine 46 each contribute to the FAD site. Residues asparagine 68 and asparagine 92 are each glycosylated (N-linked (GlcNAc...) asparagine). Arginine 119 lines the FAD pocket. Asparagine 170, asparagine 231, and asparagine 251 each carry an N-linked (GlcNAc...) asparagine glycan. FAD contacts are provided by aspartate 326 and glycine 339.

The protein belongs to the paxM FAD-dependent monooxygenase family. It depends on FAD as a cofactor.

It functions in the pathway secondary metabolite biosynthesis. Functionally, FAD-dependent monooxygenase; part of the gene cluster that mediates the biosynthesis of neosartoricin B, a prenylated anthracenone that probably exhibits T-cell antiproliferative activity, suggestive of a physiological role as an immunosuppressive agent. The non-reducing polyketide synthase nscA probably synthesizes and cyclizes the decaketide backbone. The hydrolase nscB then mediates the product release through hydrolysis followed by spontaneous decarboxylation. The prenyltransferase nscD catalyzes the addition of the dimethylallyl group to the aromatic C5. The FAD-dependent monooxygenase nscC is then responsible for the stereospecific hydroxylation at C2. Neosartoricin B can be converted into two additional compounds neosartoricins C and D. Neosartoricin C is a spirocyclic compound that is cyclized through the attack of C3 hydroxyl on C14, followed by dehydration. On the other hand, neosartoricin D is a further cyclized compound in which attack of C2 on C14 in neosartoricin C results in the formation of the acetal-containing dioxabicyclo-octanone ring. Both of these compounds are novel and possibly represent related metabolites of the gene cluster. In Trichophyton rubrum (strain ATCC MYA-4607 / CBS 118892) (Athlete's foot fungus), this protein is FAD-dependent monooxygenase nscC.